Here is a 252-residue protein sequence, read N- to C-terminus: Triosephosphate isomerase (252 aa).

10–12 (NWK) provides a ligand contact to substrate. Histidine 96 (electrophile) is an active-site residue. Glutamate 168 functions as the Proton acceptor in the catalytic mechanism. Substrate-binding positions include glycine 174, serine 214, and 235–236 (GG).

Belongs to the triosephosphate isomerase family. As to quaternary structure, homodimer.

It localises to the cytoplasm. The enzyme catalyses D-glyceraldehyde 3-phosphate = dihydroxyacetone phosphate. The protein operates within carbohydrate biosynthesis; gluconeogenesis. It participates in carbohydrate degradation; glycolysis; D-glyceraldehyde 3-phosphate from glycerone phosphate: step 1/1. In terms of biological role, involved in the gluconeogenesis. Catalyzes stereospecifically the conversion of dihydroxyacetone phosphate (DHAP) to D-glyceraldehyde-3-phosphate (G3P). This is Triosephosphate isomerase from Lactobacillus helveticus (strain DPC 4571).